The chain runs to 138 residues: 16 kDa phloem protein 2 (138 aa).

Residues 1-108 (MGMGMMEVHL…LAEGVRKGWS (108 aa)) form the C2 domain. Positions 20, 27, 78, 80, and 86 each coordinate Ca(2+).

Ca(2+) is required as a cofactor. As to expression, sieve elements of leaves, stems, roots and flowers.

In terms of biological role, binds to both sense and antisense RNA. Interacts with mesophyll plasmodesmata to mediate its own cell-to-cell transport and potentiate RNA trafficking. In Cucurbita maxima (Pumpkin), this protein is 16 kDa phloem protein 2 (PP16-2).